Consider the following 791-residue polypeptide: Subtilisin-like protease SBT5.6 (791 aa).

The signal sequence occupies residues 1-20 (MKKLTSLFPLLFLIPLLASC). Residues 21-108 (AEEKQVYIVY…KSHPRKYEAH (88 aa)) constitute a propeptide, activation peptide. Residues 26–104 (VYIVYFGEHK…VSVFKSHPRK (79 aa)) enclose the Inhibitor I9 domain. Residues 134–645 (ADDRFRVGRN…SGHFRPTKAA (512 aa)) enclose the Peptidase S8 domain. The Charge relay system role is filled by aspartate 160. 2 N-linked (GlcNAc...) asparagine glycosylation sites follow: asparagine 193 and asparagine 219. The active-site Charge relay system is the histidine 235. The PA domain maps to 400-494 (FAPLVYASNV…VTPTVVDKIL (95 aa)). The N-linked (GlcNAc...) asparagine glycan is linked to asparagine 417. Catalysis depends on serine 578, which acts as the Charge relay system. N-linked (GlcNAc...) asparagine glycans are attached at residues asparagine 666, asparagine 713, and asparagine 761.

It belongs to the peptidase S8 family.

The protein resides in the secreted. The polypeptide is Subtilisin-like protease SBT5.6 (Arabidopsis thaliana (Mouse-ear cress)).